Consider the following 527-residue polypeptide: 4-alpha-glucanotransferase (527 aa).

It belongs to the disproportionating enzyme family.

It is found in the cytoplasm. It catalyses the reaction Transfers a segment of a (1-&gt;4)-alpha-D-glucan to a new position in an acceptor, which may be glucose or a (1-&gt;4)-alpha-D-glucan.. This is 4-alpha-glucanotransferase (malQ) from Chlamydia muridarum (strain MoPn / Nigg).